The primary structure comprises 459 residues: Vasoactive intestinal polypeptide receptor 1 (459 aa).

The signal sequence occupies residues 1–30 (MRPPSLPPARWLCVLAGALACALGPAGSRA). The Extracellular segment spans residues 31–142 (ASPHQECEYL…EQQQTEFYDA (112 aa)). Disulfide bonds link Cys-37/Cys-209, Cys-50/Cys-72, Cys-63/Cys-105, Cys-86/Cys-122, and Cys-216/Cys-286. Asn-58, Asn-69, Asn-100, and Asn-104 each carry an N-linked (GlcNAc...) asparagine glycan. A helical transmembrane segment spans residues 143-167 (VKTGYTIGYSLSLASLLVAMAILSL). The Cytoplasmic portion of the chain corresponds to 168–175 (FRKLHCTR). Residues 176 to 197 (NYIHMHLFMSFILRATAVFIKD) form a helical membrane-spanning segment. The Extracellular segment spans residues 198–217 (MALFNNGETDHCSEASVSCK). The helical transmembrane segment at 218–242 (AAVVFFQYCVMANFFWLLVEGLYLH) threads the bilayer. Over 243–255 (TLLAVSFFSERKY) the chain is Cytoplasmic. The helical transmembrane segment at 256-277 (FWGYILIGWGVPSVFIMIWTIV) threads the bilayer. At 278–293 (RIHFEDFGCWDTIINS) the chain is on the extracellular side. Asn-292 carries an N-linked (GlcNAc...) asparagine glycan. A helical membrane pass occupies residues 294 to 318 (SLWWIIKGPILISILVNFILFICII). Topologically, residues 319-340 (RILVQKLRPPDIGKNDSSPYSR) are cytoplasmic. Residues 341–361 (LAKSTLLLIPLFGVHYVMFAF) traverse the membrane as a helical segment. At 362 to 369 (FPDNFKAQ) the chain is on the extracellular side. The helical transmembrane segment at 370-393 (VKMVFELVVGSFQGFVVAILYCFL) threads the bilayer. Residues 394 to 459 (NGEVQAELRR…SSFQAEVSLV (66 aa)) lie on the Cytoplasmic side of the membrane.

Belongs to the G-protein coupled receptor 2 family. Interacts with ADCYAP1/PACAP; activated by both PACAP27 and PACAP38 neuropeptides. Interacts with VIP; the interaction results in VIPR1 activation.

The protein resides in the cell membrane. Its function is as follows. G protein-coupled receptor activated by the neuropeptides vasoactive intestinal peptide (VIP) and pituitary adenylate cyclase-activating polypeptide (ADCYAP1/PACAP). Binds VIP and both PACAP27 and PACAP38 bioactive peptides with the following order of ligand affinity VIP = PACAP27 &gt; PACAP38. Ligand binding causes a conformation change that triggers signaling via guanine nucleotide-binding proteins (G proteins) and modulates the activity of downstream effectors. Activates cAMP-dependent pathway. In Mus musculus (Mouse), this protein is Vasoactive intestinal polypeptide receptor 1.